The primary structure comprises 262 residues: Tetrahydromethanopterin S-methyltransferase subunit C (262 aa).

6 consecutive transmembrane segments (helical) span residues 35 to 57, 70 to 92, 97 to 119, 140 to 162, 172 to 194, and 214 to 236; these read FVPS…AGAN, GVPS…GVLI, GLPV…FIVG, LSLM…FSAD, GVIA…ACIG, and WLIF…FWLY.

This sequence belongs to the MtrC family. In terms of assembly, the complex is composed of 8 subunits; MtrA, MtrB, MtrC, MtrD, MtrE, MtrF, MtrG and MtrH.

It is found in the cell membrane. It carries out the reaction 5-methyl-5,6,7,8-tetrahydromethanopterin + coenzyme M + 2 Na(+)(in) = 5,6,7,8-tetrahydromethanopterin + methyl-coenzyme M + 2 Na(+)(out). It participates in one-carbon metabolism; methanogenesis from CO(2); methyl-coenzyme M from 5,10-methylene-5,6,7,8-tetrahydromethanopterin: step 2/2. Part of a complex that catalyzes the formation of methyl-coenzyme M and tetrahydromethanopterin from coenzyme M and methyl-tetrahydromethanopterin. This is an energy-conserving, sodium-ion translocating step. This is Tetrahydromethanopterin S-methyltransferase subunit C from Methanococcus maripaludis (strain DSM 14266 / JCM 13030 / NBRC 101832 / S2 / LL).